Consider the following 539-residue polypeptide: Peptide chain release factor 3 (539 aa).

One can recognise a tr-type G domain in the interval 14-283 (EKRRNFAIIS…AFLEYALQPE (270 aa)). GTP is bound by residues 23–30 (SHPDAGKT), 91–95 (DTPGH), and 145–148 (NKLD).

Belongs to the TRAFAC class translation factor GTPase superfamily. Classic translation factor GTPase family. PrfC subfamily.

Its subcellular location is the cytoplasm. Increases the formation of ribosomal termination complexes and stimulates activities of RF-1 and RF-2. It binds guanine nucleotides and has strong preference for UGA stop codons. It may interact directly with the ribosome. The stimulation of RF-1 and RF-2 is significantly reduced by GTP and GDP, but not by GMP. In Rippkaea orientalis (strain PCC 8801 / RF-1) (Cyanothece sp. (strain PCC 8801)), this protein is Peptide chain release factor 3.